Here is a 455-residue protein sequence, read N- to C-terminus: Ribulose bisphosphate carboxylase large chain (455 aa).

Lys-5 bears the N6,N6,N6-trimethyllysine mark. Residues Asn-114 and Thr-164 each coordinate substrate. Residue Lys-166 is the Proton acceptor of the active site. Lys-168 is a substrate binding site. Mg(2+) contacts are provided by Lys-192, Asp-194, and Glu-195. Lys-192 carries the N6-carboxylysine modification. Residue His-285 is the Proton acceptor of the active site. Substrate contacts are provided by Arg-286, His-318, and Ser-370.

Belongs to the RuBisCO large chain family. Type I subfamily. In terms of assembly, heterohexadecamer of 8 large chains and 8 small chains. Requires Mg(2+) as cofactor.

It is found in the plastid. The protein localises to the chloroplast. The catalysed reaction is 2 (2R)-3-phosphoglycerate + 2 H(+) = D-ribulose 1,5-bisphosphate + CO2 + H2O. The enzyme catalyses D-ribulose 1,5-bisphosphate + O2 = 2-phosphoglycolate + (2R)-3-phosphoglycerate + 2 H(+). In terms of biological role, ruBisCO catalyzes two reactions: the carboxylation of D-ribulose 1,5-bisphosphate, the primary event in carbon dioxide fixation, as well as the oxidative fragmentation of the pentose substrate in the photorespiration process. Both reactions occur simultaneously and in competition at the same active site. This chain is Ribulose bisphosphate carboxylase large chain, found in Tamarindus indica (Tamarind).